A 224-amino-acid chain; its full sequence is Protein PLANT CADMIUM RESISTANCE 6 (224 aa).

The helical transmembrane segment at 131 to 151 (GMLYGLICCLFAIPCVYTCTF) threads the bilayer.

Belongs to the cornifelin family.

It is found in the membrane. May be involved in heavy metals transport. The protein is Protein PLANT CADMIUM RESISTANCE 6 (PCR6) of Arabidopsis thaliana (Mouse-ear cress).